The chain runs to 171 residues: Adenine phosphoribosyltransferase (171 aa).

This sequence belongs to the purine/pyrimidine phosphoribosyltransferase family. As to quaternary structure, homodimer.

The protein resides in the cytoplasm. It catalyses the reaction AMP + diphosphate = 5-phospho-alpha-D-ribose 1-diphosphate + adenine. It functions in the pathway purine metabolism; AMP biosynthesis via salvage pathway; AMP from adenine: step 1/1. Functionally, catalyzes a salvage reaction resulting in the formation of AMP, that is energically less costly than de novo synthesis. The sequence is that of Adenine phosphoribosyltransferase from Ruminiclostridium cellulolyticum (strain ATCC 35319 / DSM 5812 / JCM 6584 / H10) (Clostridium cellulolyticum).